Reading from the N-terminus, the 238-residue chain is Uridylate kinase (238 aa).

12–15 (KLSG) is a binding site for ATP. Position 54 (glycine 54) interacts with UMP. ATP is bound by residues glycine 55 and arginine 59. UMP-binding positions include aspartate 74 and 135–142 (VGAPYFTT). Positions 162, 168, and 171 each coordinate ATP.

The protein belongs to the UMP kinase family. Homohexamer.

It localises to the cytoplasm. The catalysed reaction is UMP + ATP = UDP + ADP. The protein operates within pyrimidine metabolism; CTP biosynthesis via de novo pathway; UDP from UMP (UMPK route): step 1/1. With respect to regulation, inhibited by UTP. In terms of biological role, catalyzes the reversible phosphorylation of UMP to UDP. In Erythrobacter litoralis (strain HTCC2594), this protein is Uridylate kinase.